Reading from the N-terminus, the 790-residue chain is Lon protease 2 (790 aa).

Residues 18–210 form the Lon N-terminal domain; that stretch reads LRILPLRNMV…HVTFYMTRQL (193 aa). 362 to 369 lines the ATP pocket; the sequence is GPPGVGKT. Residues 598-779 enclose the Lon proteolytic domain; it reads SWGCGIATGL…SDVLQLALLP (182 aa). Catalysis depends on residues Ser685 and Lys728.

It belongs to the peptidase S16 family. In terms of assembly, homohexamer. Organized in a ring with a central cavity.

It is found in the cytoplasm. The enzyme catalyses Hydrolysis of proteins in presence of ATP.. Its function is as follows. ATP-dependent serine protease that mediates the selective degradation of mutant and abnormal proteins as well as certain short-lived regulatory proteins. Required for cellular homeostasis and for survival from DNA damage and developmental changes induced by stress. Degrades polypeptides processively to yield small peptide fragments that are 5 to 10 amino acids long. Binds to DNA in a double-stranded, site-specific manner. This chain is Lon protease 2, found in Syntrophobacter fumaroxidans (strain DSM 10017 / MPOB).